Consider the following 187-residue polypeptide: dITP/XTP pyrophosphatase (187 aa).

A substrate-binding site is contributed by Thr-7–Lys-12. Residues Glu-36 and Asp-65 each contribute to the Mg(2+) site. Asp-65 acts as the Proton acceptor in catalysis. Substrate-binding positions include Thr-66, Phe-140–Asp-143, Lys-163, and His-168–Arg-169.

It belongs to the HAM1 NTPase family. As to quaternary structure, homodimer. It depends on Mg(2+) as a cofactor.

The enzyme catalyses XTP + H2O = XMP + diphosphate + H(+). The catalysed reaction is dITP + H2O = dIMP + diphosphate + H(+). It catalyses the reaction ITP + H2O = IMP + diphosphate + H(+). Pyrophosphatase that catalyzes the hydrolysis of nucleoside triphosphates to their monophosphate derivatives, with a high preference for the non-canonical purine nucleotides XTP (xanthosine triphosphate), dITP (deoxyinosine triphosphate) and ITP. Seems to function as a house-cleaning enzyme that removes non-canonical purine nucleotides from the nucleotide pool, thus preventing their incorporation into DNA/RNA and avoiding chromosomal lesions. In Pyrobaculum aerophilum (strain ATCC 51768 / DSM 7523 / JCM 9630 / CIP 104966 / NBRC 100827 / IM2), this protein is dITP/XTP pyrophosphatase.